Reading from the N-terminus, the 345-residue chain is MSDTPQSEPRRSDDRSGADDATAAAAGSTDAAAAAVSSKTGGIAGPPGGPGEVDGDEPAVARTVGESDEQLQDAWTDYEFDGDAKVSVSDLDTYYGEERALESVSLDIPAESVTALIGPSGCGKSTFLRCLNRMNDRIRGARVEGRVALDDRDVYGDGVNLVELRRQVGMVFQEPNPFPKSIRDNISYGPRKHGDLETGLLARLLGRDDRDAERDLVERALRRAALWDEVNDRLGDNALGLSGGQQQRLCIARCLAVDPDVILMDEPASALDPVATAKIEDLIEELAEEYTVVVVTHNMQQAARISDQTAVFLTGGRLAEYDATDAIFQNPQSQRVEDYVAGKFG.

Residues 1-57 form a disordered region; sequence MSDTPQSEPRRSDDRSGADDATAAAAGSTDAAAAAVSSKTGGIAGPPGGPGEVDGDE. Over residues 8–18 the composition is skewed to basic and acidic residues; sequence EPRRSDDRSGA. Residues 19 to 35 show a composition bias toward low complexity; that stretch reads DDATAAAAGSTDAAAAA. Residues 42 to 52 are compositionally biased toward gly residues; the sequence is GIAGPPGGPGE. Residues 86–340 form the ABC transporter domain; the sequence is VSVSDLDTYY…PQSQRVEDYV (255 aa). 118–125 lines the ATP pocket; that stretch reads GPSGCGKS.

This sequence belongs to the ABC transporter superfamily. Phosphate importer (TC 3.A.1.7) family. As to quaternary structure, the complex is composed of two ATP-binding proteins (PstB), two transmembrane proteins (PstC and PstA) and a solute-binding protein (PstS).

It localises to the cell membrane. The catalysed reaction is phosphate(out) + ATP + H2O = ADP + 2 phosphate(in) + H(+). Part of the ABC transporter complex PstSACB involved in phosphate import. Responsible for energy coupling to the transport system. This chain is Phosphate import ATP-binding protein PstB 2, found in Halobacterium salinarum (strain ATCC 700922 / JCM 11081 / NRC-1) (Halobacterium halobium).